We begin with the raw amino-acid sequence, 217 residues long: 3,4-dihydroxy-2-butanone 4-phosphate synthase (217 aa).

Residues 37 to 38 (RE), aspartate 42, 150 to 154 (RGGHT), and glutamate 174 each bind D-ribulose 5-phosphate. Glutamate 38 contributes to the Mg(2+) binding site. Residue histidine 153 participates in Mg(2+) binding.

Belongs to the DHBP synthase family. Homodimer. It depends on Mg(2+) as a cofactor. The cofactor is Mn(2+).

The catalysed reaction is D-ribulose 5-phosphate = (2S)-2-hydroxy-3-oxobutyl phosphate + formate + H(+). Its pathway is cofactor biosynthesis; riboflavin biosynthesis; 2-hydroxy-3-oxobutyl phosphate from D-ribulose 5-phosphate: step 1/1. Catalyzes the conversion of D-ribulose 5-phosphate to formate and 3,4-dihydroxy-2-butanone 4-phosphate. In Klebsiella pneumoniae subsp. pneumoniae (strain ATCC 700721 / MGH 78578), this protein is 3,4-dihydroxy-2-butanone 4-phosphate synthase.